The following is a 169-amino-acid chain: Sulfopyruvate decarboxylase subunit alpha (169 aa).

The protein belongs to the ComD family. Heterododecamer composed of 6 subunits alpha and 6 subunits beta.

It carries out the reaction 3-sulfopyruvate + H(+) = sulfoacetaldehyde + CO2. It participates in cofactor biosynthesis; coenzyme M biosynthesis; sulfoacetaldehyde from phosphoenolpyruvate and sulfite: step 4/4. Inhibited by oxygen when heated in air at 80 degrees Celsius. The enzyme is reactivated by addition of dithionite. Functionally, involved in the biosynthesis of the coenzyme M (2-mercaptoethanesulfonic acid). Catalyzes the decarboxylation of sulfopyruvate to sulfoacetaldehyde. This is Sulfopyruvate decarboxylase subunit alpha from Methanocaldococcus jannaschii (strain ATCC 43067 / DSM 2661 / JAL-1 / JCM 10045 / NBRC 100440) (Methanococcus jannaschii).